Consider the following 106-residue polypeptide: U1-lycotoxin-Ls1b (106 aa).

The signal sequence occupies residues 1-19 (MKVLVVVALLVTLISYSSS). A propeptide spanning residues 20-40 (EGIDDPEADELLSLMANEQTR) is cleaved from the precursor. Intrachain disulfides connect C43–C58, C50–C67, C57–C85, and C69–C83.

This sequence belongs to the neurotoxin 19 (CSTX) family. 04 (U1-Lctx) subfamily. Expressed by the venom gland.

It localises to the secreted. The polypeptide is U1-lycotoxin-Ls1b (Lycosa singoriensis (Wolf spider)).